Here is a 191-residue protein sequence, read N- to C-terminus: Protein 2 in picA locus (191 aa).

It belongs to the acyltransferase 3 family.

It is found in the cell membrane. Its function is as follows. Seems to regulate the surface properties of the bacterium in the presence of plant cells or plant cell extracts. The polypeptide is Protein 2 in picA locus (Rhizobium radiobacter (Agrobacterium tumefaciens)).